The sequence spans 286 residues: Phosphatidylserine decarboxylase proenzyme (286 aa).

Catalysis depends on charge relay system; for autoendoproteolytic cleavage activity residues Asp-90, His-147, and Ser-252. Ser-252 serves as the catalytic Schiff-base intermediate with substrate; via pyruvic acid; for decarboxylase activity. Ser-252 bears the Pyruvic acid (Ser); by autocatalysis mark.

It belongs to the phosphatidylserine decarboxylase family. PSD-B subfamily. Prokaryotic type I sub-subfamily. In terms of assembly, heterodimer of a large membrane-associated beta subunit and a small pyruvoyl-containing alpha subunit. Pyruvate is required as a cofactor. Post-translationally, is synthesized initially as an inactive proenzyme. Formation of the active enzyme involves a self-maturation process in which the active site pyruvoyl group is generated from an internal serine residue via an autocatalytic post-translational modification. Two non-identical subunits are generated from the proenzyme in this reaction, and the pyruvate is formed at the N-terminus of the alpha chain, which is derived from the carboxyl end of the proenzyme. The autoendoproteolytic cleavage occurs by a canonical serine protease mechanism, in which the side chain hydroxyl group of the serine supplies its oxygen atom to form the C-terminus of the beta chain, while the remainder of the serine residue undergoes an oxidative deamination to produce ammonia and the pyruvoyl prosthetic group on the alpha chain. During this reaction, the Ser that is part of the protease active site of the proenzyme becomes the pyruvoyl prosthetic group, which constitutes an essential element of the active site of the mature decarboxylase.

It is found in the cell membrane. It catalyses the reaction a 1,2-diacyl-sn-glycero-3-phospho-L-serine + H(+) = a 1,2-diacyl-sn-glycero-3-phosphoethanolamine + CO2. It participates in phospholipid metabolism; phosphatidylethanolamine biosynthesis; phosphatidylethanolamine from CDP-diacylglycerol: step 2/2. In terms of biological role, catalyzes the formation of phosphatidylethanolamine (PtdEtn) from phosphatidylserine (PtdSer). This chain is Phosphatidylserine decarboxylase proenzyme, found in Azotobacter vinelandii (strain DJ / ATCC BAA-1303).